The following is a 758-amino-acid chain: 5-methyltetrahydropteroyltriglutamate--homocysteine methyltransferase (758 aa).

5-methyltetrahydropteroyltri-L-glutamate contacts are provided by residues 17-20 (RELK) and K117. L-homocysteine is bound by residues 434 to 436 (IGS) and E487. L-methionine contacts are provided by residues 434–436 (IGS) and E487. 5-methyltetrahydropteroyltri-L-glutamate-binding positions include 518-519 (RC) and W564. Position 602 (D602) interacts with L-homocysteine. D602 is a binding site for L-methionine. E608 lines the 5-methyltetrahydropteroyltri-L-glutamate pocket. H644, C646, and E668 together coordinate Zn(2+). The active-site Proton donor is the H697. C729 is a binding site for Zn(2+).

The protein belongs to the vitamin-B12 independent methionine synthase family. Zn(2+) is required as a cofactor.

It carries out the reaction 5-methyltetrahydropteroyltri-L-glutamate + L-homocysteine = tetrahydropteroyltri-L-glutamate + L-methionine. The protein operates within amino-acid biosynthesis; L-methionine biosynthesis via de novo pathway; L-methionine from L-homocysteine (MetE route): step 1/1. In terms of biological role, catalyzes the transfer of a methyl group from 5-methyltetrahydrofolate to homocysteine resulting in methionine formation. This Yersinia pseudotuberculosis serotype I (strain IP32953) protein is 5-methyltetrahydropteroyltriglutamate--homocysteine methyltransferase.